A 1059-amino-acid chain; its full sequence is Potassium transporter TRK1 (1059 aa).

Over Met1–Asn46 the chain is Cytoplasmic. The helical transmembrane segment at Phe47–Tyr67 threads the bilayer. Topologically, residues Pro68–Ala73 are extracellular. Residues Tyr74–Leu90 lie within the membrane without spanning it. At Asn91–Ser99 the chain is on the extracellular side. The chain crosses the membrane as a helical span at residues Leu100–Leu122. Topologically, residues Leu123–Lys625 are cytoplasmic. 3 disordered regions span residues Arg180 to Glu276, Ile304 to Asp350, and Pro404 to Asn574. Low complexity predominate over residues Ser186–Thr203. Basic and acidic residues predominate over residues Glu236 to Arg245. Polar residues predominate over residues Pro335 to Asn344. Over residues Thr412 to Ser423 the composition is skewed to low complexity. Composition is skewed to acidic residues over residues Asp428–Ser449 and Tyr469–Glu490. A compositionally biased stretch (polar residues) spans Arg524–Ser536. Positions Lys540–Arg552 are enriched in basic residues. Residues Asn556–Ser566 show a composition bias toward polar residues. Residues Leu626–Trp649 traverse the membrane as a helical segment. Over Ile650–Ala668 the chain is Extracellular. Residues Trp669–Thr685 lie within the membrane without spanning it. Residues Leu686–Gln696 are Extracellular-facing. Residues Asn697–Thr713 traverse the membrane as a helical segment. Over Gly714–Ser757 the chain is Cytoplasmic. A helical membrane pass occupies residues Val758–Leu781. Over Asp782–Arg796 the chain is Extracellular. Residues Val797 to Ser813 lie within the membrane without spanning it. At Val814 to Leu820 the chain is on the extracellular side. Residues His821 to Arg844 traverse the membrane as a helical segment. Topologically, residues Arg845–His877 are cytoplasmic. A helical transmembrane segment spans residues Leu878–Ala899. Residues Glu900–Ser912 lie on the Extracellular side of the membrane. Residues Ile913–Met931 lie within the membrane without spanning it. At Gly932–Asn945 the chain is on the extracellular side. Residues Val946–Ile968 form a helical membrane-spanning segment. The Cytoplasmic segment spans residues Asp969–Val1059.

The protein belongs to the TrkH potassium transport family.

It localises to the cell membrane. It carries out the reaction K(+)(in) = K(+)(out). The catalysed reaction is chloride(in) = chloride(out). With respect to regulation, TRK1-mediated chloride conductance is blocked by 4,4'-diisothiocyanatostilbene-2,2'-disulfonic acid. Potassium transporter that mediates K(+) influx, as well as Cl(-) efflux as a secondary function. TRK1 is the major K(+) uptake transporter that regulates membrane potential and intracellular pH. The TRK1-mediated Cl(-) efflux should serve as a Cl(-) detoxification route and may play a role in sustaining C.albicans on mammalian epithelial surfaces, or in physiological saline solutions such as saliva. Functionally, mediates candidacidal activities of cysteine-free peptides, but not of defensins. The hallmark of salivary gland-secreted histatin-5 (Hst 5) killing of C.albicans is the rapid efflux of cellular ATP and other small nucleotides and ions from the cell as well as concurrent intracellular uptake of propidium iodide (PI). TRK1 is the channel for Hst 5-induced killing and histatin-5 may directly or indirectly alter TRK1 function, allowing the efflux of larger anions, including ATP, and the influx of small cationic dyes, such as PI. This Candida albicans (Yeast) protein is Potassium transporter TRK1.